Reading from the N-terminus, the 72-residue chain is Brevinin-2SN4 (72 aa).

Positions 1–22 (MFTMKKPMLLLFFLGMISMSLC) are cleaved as a signal peptide. The propeptide at 23–40 (QDERGADEDDGGEMTEEE) is removed in mature form. Residues Cys66 and Cys72 are joined by a disulfide bond.

This sequence belongs to the frog skin active peptide (FSAP) family. Brevinin subfamily. In terms of tissue distribution, expressed by the skin glands.

The protein localises to the secreted. Functionally, antimicrobial peptide. Active against a variety of Gram-negative and Gram-positive bacterial strains. Not active against fungi. Shows very weak hemolytic activity against human erythrocytes. The chain is Brevinin-2SN4 from Sylvirana spinulosa (Fine-spined frog).